The primary structure comprises 154 residues: Ribonuclease H (154 aa).

Positions 1-142 (MTPKLVIYTD…ADELARLGML (142 aa)) constitute an RNase H type-1 domain. Aspartate 10, glutamate 48, aspartate 70, and aspartate 134 together coordinate Mg(2+).

The protein belongs to the RNase H family. Monomer. Requires Mg(2+) as cofactor.

It localises to the cytoplasm. The enzyme catalyses Endonucleolytic cleavage to 5'-phosphomonoester.. In terms of biological role, endonuclease that specifically degrades the RNA of RNA-DNA hybrids. The protein is Ribonuclease H of Caulobacter sp. (strain K31).